We begin with the raw amino-acid sequence, 314 residues long: Homeobox-leucine zipper protein HAT7 (314 aa).

Residues 77 to 109 form a disordered region; it reads HHHLTQKSPTTTNNMNDQDQVGEEDNLSDDGSH. Residues 82–95 show a composition bias toward polar residues; the sequence is QKSPTTTNNMNDQD. The segment at residues 112–171 is a DNA-binding region (homeobox); that stretch reads LGEKKKRLNLEQVRALEKSFELGNKLEPERKMQLAKALGLQPRQIAIWFQNRRARWKTKQ. A leucine-zipper region spans residues 172-207; it reads LERDYDSLKKQFDVLKSDNDSLLAHNKKLHAELVAL.

Belongs to the HD-ZIP homeobox family. Class I subfamily. As to expression, expressed predominantly in flowers, and in the cortex of the root and the stem.

It localises to the nucleus. Its function is as follows. Probable transcription factor. This Arabidopsis thaliana (Mouse-ear cress) protein is Homeobox-leucine zipper protein HAT7 (HAT7).